Here is a 415-residue protein sequence, read N- to C-terminus: Multifunctional CCA protein (415 aa).

Residues Gly8 and Arg11 each contribute to the ATP site. Gly8 and Arg11 together coordinate CTP. Mg(2+) contacts are provided by Asp21 and Asp23. Arg91, Arg143, and Arg146 together coordinate ATP. Residues Arg91, Arg143, and Arg146 each coordinate CTP. An HD domain is found at 232-333 (TGVHVMMVID…VRLLERCDAL (102 aa)).

The protein belongs to the tRNA nucleotidyltransferase/poly(A) polymerase family. Bacterial CCA-adding enzyme type 1 subfamily. As to quaternary structure, monomer. Can also form homodimers and oligomers. Mg(2+) is required as a cofactor. Ni(2+) serves as cofactor.

It catalyses the reaction a tRNA precursor + 2 CTP + ATP = a tRNA with a 3' CCA end + 3 diphosphate. It carries out the reaction a tRNA with a 3' CCA end + 2 CTP + ATP = a tRNA with a 3' CCACCA end + 3 diphosphate. Its function is as follows. Catalyzes the addition and repair of the essential 3'-terminal CCA sequence in tRNAs without using a nucleic acid template. Adds these three nucleotides in the order of C, C, and A to the tRNA nucleotide-73, using CTP and ATP as substrates and producing inorganic pyrophosphate. tRNA 3'-terminal CCA addition is required both for tRNA processing and repair. Also involved in tRNA surveillance by mediating tandem CCA addition to generate a CCACCA at the 3' terminus of unstable tRNAs. While stable tRNAs receive only 3'-terminal CCA, unstable tRNAs are marked with CCACCA and rapidly degraded. The polypeptide is Multifunctional CCA protein (Cupriavidus taiwanensis (strain DSM 17343 / BCRC 17206 / CCUG 44338 / CIP 107171 / LMG 19424 / R1) (Ralstonia taiwanensis (strain LMG 19424))).